The sequence spans 306 residues: Probable arylamine N-acetyltransferase 3 (306 aa).

Cys-75 functions as the Acyl-thioester intermediate in the catalytic mechanism. Residues His-115 and Asp-130 contribute to the active site.

It belongs to the arylamine N-acetyltransferase family.

It carries out the reaction an arylamine + acetyl-CoA = an N-acetylarylamine + CoA. This Dictyostelium discoideum (Social amoeba) protein is Probable arylamine N-acetyltransferase 3.